The chain runs to 348 residues: Lipoyl synthase (348 aa).

The [4Fe-4S] cluster site is built by Cys55, Cys60, Cys66, Cys81, Cys85, Cys88, and Ser292. The region spanning 67–281 (WESREATFLI…ADAAKEMGFA (215 aa)) is the Radical SAM core domain.

Belongs to the radical SAM superfamily. Lipoyl synthase family. [4Fe-4S] cluster is required as a cofactor.

It is found in the cytoplasm. The enzyme catalyses [[Fe-S] cluster scaffold protein carrying a second [4Fe-4S](2+) cluster] + N(6)-octanoyl-L-lysyl-[protein] + 2 oxidized [2Fe-2S]-[ferredoxin] + 2 S-adenosyl-L-methionine + 4 H(+) = [[Fe-S] cluster scaffold protein] + N(6)-[(R)-dihydrolipoyl]-L-lysyl-[protein] + 4 Fe(3+) + 2 hydrogen sulfide + 2 5'-deoxyadenosine + 2 L-methionine + 2 reduced [2Fe-2S]-[ferredoxin]. It functions in the pathway protein modification; protein lipoylation via endogenous pathway; protein N(6)-(lipoyl)lysine from octanoyl-[acyl-carrier-protein]: step 2/2. Catalyzes the radical-mediated insertion of two sulfur atoms into the C-6 and C-8 positions of the octanoyl moiety bound to the lipoyl domains of lipoate-dependent enzymes, thereby converting the octanoylated domains into lipoylated derivatives. The sequence is that of Lipoyl synthase from Corynebacterium glutamicum (strain R).